Consider the following 206-residue polypeptide: Large ribosomal subunit protein uL4 (206 aa).

Residues 46 to 78 (GNRAQKDREQVKHTTKKPWRQKGTGRARAGMSS) form a disordered region. The segment covering 58–70 (HTTKKPWRQKGTG) has biased composition (basic residues).

The protein belongs to the universal ribosomal protein uL4 family. Part of the 50S ribosomal subunit.

One of the primary rRNA binding proteins, this protein initially binds near the 5'-end of the 23S rRNA. It is important during the early stages of 50S assembly. It makes multiple contacts with different domains of the 23S rRNA in the assembled 50S subunit and ribosome. Functionally, forms part of the polypeptide exit tunnel. The polypeptide is Large ribosomal subunit protein uL4 (Burkholderia lata (strain ATCC 17760 / DSM 23089 / LMG 22485 / NCIMB 9086 / R18194 / 383)).